Consider the following 901-residue polypeptide: Protein translocase subunit SecA (901 aa).

Residues Gln-85, 103–107 (GEGKT), and Asp-510 contribute to the ATP site. A disordered region spans residues 848–901 (RINQNNLPVDENSQTTQNSETEDYSDRRIGRNEPCPCGSGKKYKHCHGSRVARQ). Polar residues predominate over residues 849–866 (INQNNLPVDENSQTTQNS). Zn(2+) is bound by residues Cys-882, Cys-884, Cys-893, and His-894. Basic residues predominate over residues 888 to 901 (KKYKHCHGSRVARQ).

It belongs to the SecA family. As to quaternary structure, monomer and homodimer. Part of the essential Sec protein translocation apparatus which comprises SecA, SecYEG and auxiliary proteins SecDF-YajC and YidC. The cofactor is Zn(2+).

The protein localises to the cell inner membrane. It is found in the cytoplasm. The catalysed reaction is ATP + H2O + cellular proteinSide 1 = ADP + phosphate + cellular proteinSide 2.. Its function is as follows. Part of the Sec protein translocase complex. Interacts with the SecYEG preprotein conducting channel. Has a central role in coupling the hydrolysis of ATP to the transfer of proteins into and across the cell membrane, serving both as a receptor for the preprotein-SecB complex and as an ATP-driven molecular motor driving the stepwise translocation of polypeptide chains across the membrane. The chain is Protein translocase subunit SecA from Haemophilus influenzae (strain 86-028NP).